The following is a 371-amino-acid chain: Lysine racemase (371 aa).

Catalysis depends on K39, which acts as the Proton acceptor. An N6-(pyridoxal phosphate)lysine modification is found at K39. Residue R135 coordinates substrate. The Proton acceptor role is filled by Y266. Substrate is bound at residue M313.

Belongs to the alanine racemase family. Homodimer. Pyridoxal 5'-phosphate is required as a cofactor.

It carries out the reaction L-lysine = D-lysine. Catalyzes the interconversion of D-lysine and L-lysine. Can also use arginine and ornithine, but not alanine. This Oenococcus oeni (strain ATCC BAA-331 / PSU-1) protein is Lysine racemase.